Here is a 204-residue protein sequence, read N- to C-terminus: Holliday junction branch migration complex subunit RuvA (204 aa).

Residues 1-67 (MIAFLSGHLV…ETELVLYGFG (67 aa)) are domain I. Residues 68–146 (SPAERDLFVE…HWRQGMGVAD (79 aa)) are domain II. The tract at residues 147-157 (QPLAGGPPMPI) is flexible linker. The tract at residues 157–204 (IREEVEMALLALGYSTQEIQAALQALPTHPRPTEDWLRDAITYLSQQP) is domain III.

The protein belongs to the RuvA family. Homotetramer. Forms an RuvA(8)-RuvB(12)-Holliday junction (HJ) complex. HJ DNA is sandwiched between 2 RuvA tetramers; dsDNA enters through RuvA and exits via RuvB. An RuvB hexamer assembles on each DNA strand where it exits the tetramer. Each RuvB hexamer is contacted by two RuvA subunits (via domain III) on 2 adjacent RuvB subunits; this complex drives branch migration. In the full resolvosome a probable DNA-RuvA(4)-RuvB(12)-RuvC(2) complex forms which resolves the HJ.

It is found in the cytoplasm. Functionally, the RuvA-RuvB-RuvC complex processes Holliday junction (HJ) DNA during genetic recombination and DNA repair, while the RuvA-RuvB complex plays an important role in the rescue of blocked DNA replication forks via replication fork reversal (RFR). RuvA specifically binds to HJ cruciform DNA, conferring on it an open structure. The RuvB hexamer acts as an ATP-dependent pump, pulling dsDNA into and through the RuvAB complex. HJ branch migration allows RuvC to scan DNA until it finds its consensus sequence, where it cleaves and resolves the cruciform DNA. This chain is Holliday junction branch migration complex subunit RuvA, found in Synechococcus sp. (strain JA-2-3B'a(2-13)) (Cyanobacteria bacterium Yellowstone B-Prime).